We begin with the raw amino-acid sequence, 714 residues long: Inducible lysine decarboxylase (714 aa).

Lys-367 bears the N6-(pyridoxal phosphate)lysine mark.

It belongs to the Orn/Lys/Arg decarboxylase class-I family. Homodecamer. Interacts with RavA. It depends on pyridoxal 5'-phosphate as a cofactor.

It is found in the cytoplasm. It carries out the reaction L-lysine + H(+) = cadaverine + CO2. This is Inducible lysine decarboxylase (cadA) from Salmonella typhi.